Here is a 326-residue protein sequence, read N- to C-terminus: Ankyrin repeat domain-containing protein 9 (326 aa).

The tract at residues 1–20 (MPWDTRPGRSANGGPEGPGA) is disordered. One copy of the ANK 1 repeat lies at 70-99 (SPSEALLYALVHDHQAYAHYLLATFPRCAL). Positions 108-109 (CC) match the Important role in both nutrient sensing and binding/regulation of IMPDH2 motif. ANK repeat units follow at residues 111–140 (APGP…DFPV) and 157–186 (GGGT…SPGL).

In terms of assembly, part of an E3 ubiquitin-protein ligase complex with Elongin BC (ELOB and ELOC), CUL5 and ANKRD9. Interacts with IMPDH2; leading to ubiquitination of IMPDH2 and its subsequent proteasomal degradation.

It localises to the cytoplasmic vesicle. The protein resides in the cytoplasm. It is found in the cytosol. The protein operates within protein modification; protein ubiquitination. In terms of biological role, substrate receptor subunit of a cullin-RING superfamily E3 ligase complex (CUL5-based E3 ubiquitin ligase complex) which mediates the ubiquitination and subsequent proteasomal degradation of target proteins. Depending of the metabolic state of the cell, promotes the proteasomal degradation of IMPDH2, the rate-limiting enzyme in GTP biosynthesis or protects IMPDH2 by stabilizing IMPDH2 filaments assembly. Implicated in different cellular processes, like copper homeostasis and cell proliferation. In Mus musculus (Mouse), this protein is Ankyrin repeat domain-containing protein 9 (Ankrd9).